Reading from the N-terminus, the 489-residue chain is Ubiquitin carboxyl-terminal hydrolase 14 (489 aa).

The region spanning 102–458 (CGLANLGNTC…SAYVLLYEAR (357 aa)) is the USP domain. The Nucleophile role is filled by cysteine 111. Histidine 409 serves as the catalytic Proton acceptor. Residues 467 to 489 (PPAPVPTEVAADTAEPMEVSEKQ) form a disordered region.

Belongs to the peptidase C19 family. USP14/UBP6 subfamily.

The catalysed reaction is Thiol-dependent hydrolysis of ester, thioester, amide, peptide and isopeptide bonds formed by the C-terminal Gly of ubiquitin (a 76-residue protein attached to proteins as an intracellular targeting signal).. Functionally, proteasome-associated deubiquitinase which releases ubiquitin from the proteasome targeted ubiquitinated proteins. Ensures the regeneration of ubiquitin at the proteasome. In Caenorhabditis elegans, this protein is Ubiquitin carboxyl-terminal hydrolase 14 (usp-14).